The chain runs to 662 residues: DNA ligase (662 aa).

Residues 31–35 (DYEYD), 80–81 (SL), and glutamate 109 each bind NAD(+). Lysine 111 serves as the catalytic N6-AMP-lysine intermediate. NAD(+)-binding residues include arginine 132, glutamate 166, lysine 282, and lysine 306. 4 residues coordinate Zn(2+): cysteine 400, cysteine 403, cysteine 418, and cysteine 423. A BRCT domain is found at 581–662 (KVNNIFEGKT…FEEMLKGENI (82 aa)).

This sequence belongs to the NAD-dependent DNA ligase family. LigA subfamily. Mg(2+) serves as cofactor. It depends on Mn(2+) as a cofactor.

It catalyses the reaction NAD(+) + (deoxyribonucleotide)n-3'-hydroxyl + 5'-phospho-(deoxyribonucleotide)m = (deoxyribonucleotide)n+m + AMP + beta-nicotinamide D-nucleotide.. Functionally, DNA ligase that catalyzes the formation of phosphodiester linkages between 5'-phosphoryl and 3'-hydroxyl groups in double-stranded DNA using NAD as a coenzyme and as the energy source for the reaction. It is essential for DNA replication and repair of damaged DNA. This Thermoanaerobacter pseudethanolicus (strain ATCC 33223 / 39E) (Clostridium thermohydrosulfuricum) protein is DNA ligase.